Reading from the N-terminus, the 292-residue chain is Syntenin-2 (292 aa).

2 PDZ domains span residues 108–187 (EIHL…IRDR) and 192–267 (TVTM…IPTV).

In terms of assembly, monomer and homodimer. Interacts with SDCBP. Interacts with TM4SF1.

It localises to the cytoplasm. The protein resides in the nucleus. Its subcellular location is the nucleolus. It is found in the nucleoplasm. The protein localises to the cell membrane. It localises to the nucleus speckle. In terms of biological role, binds phosphatidylinositol 4,5-bisphosphate (PIP2). May play a role in the organization of nuclear PIP2, cell division and cell survival. The protein is Syntenin-2 (Sdcbp2) of Mus musculus (Mouse).